The primary structure comprises 541 residues: Glucose-6-phosphate isomerase (541 aa).

Glutamate 354 serves as the catalytic Proton donor. Catalysis depends on residues histidine 385 and lysine 505.

Belongs to the GPI family.

The protein localises to the cytoplasm. It catalyses the reaction alpha-D-glucose 6-phosphate = beta-D-fructose 6-phosphate. Its pathway is carbohydrate biosynthesis; gluconeogenesis. The protein operates within carbohydrate degradation; glycolysis; D-glyceraldehyde 3-phosphate and glycerone phosphate from D-glucose: step 2/4. In terms of biological role, catalyzes the reversible isomerization of glucose-6-phosphate to fructose-6-phosphate. The chain is Glucose-6-phosphate isomerase from Cupriavidus metallidurans (strain ATCC 43123 / DSM 2839 / NBRC 102507 / CH34) (Ralstonia metallidurans).